The primary structure comprises 509 residues: Ribonuclease Y (509 aa).

A helical membrane pass occupies residues 5 to 25; the sequence is IIILLSVFCGIFFICFIICSS. Positions 199–259 constitute a KH domain; that stretch reads TTNIVKLPSD…IRREIATRTL (61 aa). The 94-residue stretch at 325–418 folds into the HD domain; that stretch reads VLAHSIEVAK…VAIADSISAS (94 aa).

Belongs to the RNase Y family.

It localises to the cell membrane. Endoribonuclease that initiates mRNA decay. This Mycoplasma mycoides subsp. mycoides SC (strain CCUG 32753 / NCTC 10114 / PG1) protein is Ribonuclease Y.